The sequence spans 361 residues: MTSRTKKLKMDEEEILKKEDGSETTSEEEKEEVEEEEEEDKKRKLVKKTPAKKAPAKKAAAKKKSKDEDEDEEEKEEEEETNKTTASVSIAIDNLDEPKVEENQMKIISWNVAGFKSVLSKGFTEYVEKENPDVLCLQETKINPSNIKKDQMPKGYEYHFIEADQKGHHGTGVLTKKKPNAITFGIGIAKHDNEGRVITLEYDQFYIVNTYIPNAGTRGLQRLDYRIKEWDVDFQAYLEKLNATKPIIWCGDLNVAHTEIDLKNPKTNKKSAGFTIEERTSFSNFLEKGYVDSYRHFNPGKEGSYTFWSYLGGGRSKNVGWRLDYFVVSKRLMDSIKISPFHRTSVMGSDHCPIGVVVDLN.

Residues 1 to 90 (MTSRTKKLKM…TNKTTASVSI (90 aa)) form a disordered region. Over residues 25 to 39 (TSEEEKEEVEEEEEE) the composition is skewed to acidic residues. The Nuclear localization signal signature appears at 41-44 (KKRK). The span at 43-64 (RKLVKKTPAKKAPAKKAAAKKK) shows a compositional bias: basic residues. Over residues 68–80 (EDEDEEEKEEEEE) the composition is skewed to acidic residues. A Mg(2+)-binding site is contributed by glutamate 139. Tyrosine 211 is an active-site residue. Mg(2+) is bound by residues aspartate 252, asparagine 254, and aspartate 350. Aspartate 252 functions as the Proton donor/acceptor in the catalytic mechanism.

This sequence belongs to the DNA repair enzymes AP/ExoA family. It depends on Mg(2+) as a cofactor. Mn(2+) is required as a cofactor.

It is found in the nucleus. The protein is DNA-(apurinic or apyrimidinic site) endonuclease (apeA) of Dictyostelium discoideum (Social amoeba).